A 305-amino-acid polypeptide reads, in one-letter code: MACILKRKSVIAVSFIAAFLFLLVVRLVNEVNFPLLLNCFGQPGTKWIPFSYTYRRPLRTHYGYINVKTQEPLQLDCDLCAIVSNSGQMVGQKVGNEIDRSSCIWRMNNAPTKGYEEDVGRMTMIRVVSHTSVPLLLKNPDYFFKEANTTIYVIWGPFRNMRKDGNGIVYNMLKKTVGIYPNAQIYVTTEKRMSYCDGVFKKETGKDRVQSGSYLSTGWFTFLLAMDACYGIHVYGMINDTYCKTEGYRKVPYHYYEQGRDECDEYFLHEHAPYGGHRFITEKKVFAKWAKKHRIIFTHPNWTLS.

Over 1–8 (MACILKRK) the chain is Cytoplasmic. Residues 9 to 28 (SVIAVSFIAAFLFLLVVRLV) traverse the membrane as a helical; Signal-anchor for type II membrane protein segment. Topologically, residues 29 to 305 (NEVNFPLLLN…IFTHPNWTLS (277 aa)) are lumenal. Residues Cys-80 and Cys-229 are joined by a disulfide bond. N-linked (GlcNAc...) asparagine glycans are attached at residues Asn-148, Asn-239, and Asn-301.

This sequence belongs to the glycosyltransferase 29 family. In terms of tissue distribution, expressed in brain and kidney. Observed in the epithelium of the proximal tubules, marginal expression was also found in the distal tubules and collecting tubules.

It localises to the golgi apparatus membrane. The enzyme catalyses an alpha-Neu5Ac-(2-&gt;3)-beta-D-Gal-(1-&gt;3)-D-GlcNAc derivative + CMP-N-acetyl-beta-neuraminate = an alpha-Neu5Ac-(2-&gt;3)-beta-D-Gal-(1-&gt;3)-[alpha-Neu5Ac-(2-&gt;6)]-D-GlcNAc derivative + CMP + H(+). The catalysed reaction is a ganglioside GM1b (d18:1(4E)) + CMP-N-acetyl-beta-neuraminate = a ganglioside GD1alpha (d18:1(4E)) + CMP + H(+). It carries out the reaction a globoside MSGG + CMP-N-acetyl-beta-neuraminate = a globoside DSGG + CMP + H(+). It catalyses the reaction 3-O-[alpha-Neu5Ac-(2-&gt;3)-beta-D-Gal-(1-&gt;3)-alpha-D-GalNAc]-L-Ser-[protein] + CMP-N-acetyl-beta-neuraminate = a 3-O-{alpha-Neu5Ac-(2-&gt;3)-beta-D-Gal-(1-&gt;3)-[alpha-Neu5Ac-(2-&gt;6)]-alpha-D-GalNAc}-L-seryl-[protein] + CMP + H(+). The enzyme catalyses 3-O-[alpha-Neu5Ac-(2-&gt;3)-beta-D-Gal-(1-&gt;3)-alpha-D-GalNAc]-L-Thr-[protein] + CMP-N-acetyl-beta-neuraminate = a 3-O-{alpha-Neu5Ac-(2-&gt;3)-beta-D-Gal-(1-&gt;3)-[alpha-Neu5Ac-(2-&gt;6)]-alpha-D-GalNAc}-L-threonyl-[protein] + CMP + H(+). Its pathway is protein modification; protein glycosylation. It participates in glycolipid biosynthesis. Its function is as follows. Transfers the sialyl group (N-acetyl-alpha-neuraminyl or NeuAc) from CMP-NeuAc to the GalNAc residue on the NeuAc-alpha-2,3-Gal-beta-1,3-GalNAc sequence of glycoproteins and glycolipids forming an alpha-2,6-linkage. Produces branched type disialyl structures by transfer of a sialyl group onto a GalNAc residue inside the backbone core chains. ST6GalNAcIII prefers glycolipids to glycoproteins, predominantly catalyzing the biosynthesis of ganglioside GD1alpha from GM1b. GD1alpha is a critical molecule in the communication and interaction between neuronal cells and their supportive cells, particularly in brain tissues, and functions as an adhesion molecule in the process of metastasis. Sialylation of glycoproteins or glycosphingolipids is very important in tumor development, neuronal development, nerve repair, immunological processes and regulation of hormone sensitivity. The protein is Alpha-N-acetylgalactosaminide alpha-2,6-sialyltransferase 3 (ST6GALNAC3) of Homo sapiens (Human).